Here is a 181-residue protein sequence, read N- to C-terminus: 3-isopropylmalate dehydratase small subunit (181 aa).

The protein belongs to the LeuD family. LeuD type 2 subfamily. Heterodimer of LeuC and LeuD.

It catalyses the reaction (2R,3S)-3-isopropylmalate = (2S)-2-isopropylmalate. Its pathway is amino-acid biosynthesis; L-leucine biosynthesis; L-leucine from 3-methyl-2-oxobutanoate: step 2/4. Functionally, catalyzes the isomerization between 2-isopropylmalate and 3-isopropylmalate, via the formation of 2-isopropylmaleate. This Deinococcus deserti (strain DSM 17065 / CIP 109153 / LMG 22923 / VCD115) protein is 3-isopropylmalate dehydratase small subunit.